The chain runs to 235 residues: Ribonuclease 3 (235 aa).

An RNase III domain is found at 7–135; sequence FAALEARLGH…VVAAVYLDGG (129 aa). Glu-48 contacts Mg(2+). Asp-52 is a catalytic residue. Mg(2+) contacts are provided by Asp-121 and Glu-124. The active site involves Glu-124. One can recognise a DRBM domain in the interval 160–229; sequence DPKTVLQEWA…ASAFLAREGV (70 aa).

Belongs to the ribonuclease III family. Homodimer. The cofactor is Mg(2+).

The protein resides in the cytoplasm. The enzyme catalyses Endonucleolytic cleavage to 5'-phosphomonoester.. In terms of biological role, digests double-stranded RNA. Involved in the processing of primary rRNA transcript to yield the immediate precursors to the large and small rRNAs (23S and 16S). Processes some mRNAs, and tRNAs when they are encoded in the rRNA operon. Processes pre-crRNA and tracrRNA of type II CRISPR loci if present in the organism. The chain is Ribonuclease 3 from Azorhizobium caulinodans (strain ATCC 43989 / DSM 5975 / JCM 20966 / LMG 6465 / NBRC 14845 / NCIMB 13405 / ORS 571).